The chain runs to 155 residues: FAD synthase (155 aa).

Residues threonine 9 to phenylalanine 10, histidine 14 to histidine 17, and aspartate 92 contribute to the ATP site.

The protein belongs to the archaeal FAD synthase family. Homodimer. A divalent metal cation serves as cofactor.

It carries out the reaction FMN + ATP + H(+) = FAD + diphosphate. It functions in the pathway cofactor biosynthesis; FAD biosynthesis; FAD from FMN: step 1/1. In terms of biological role, catalyzes the transfer of the AMP portion of ATP to flavin mononucleotide (FMN) to produce flavin adenine dinucleotide (FAD) coenzyme. This Archaeoglobus profundus (strain DSM 5631 / JCM 9629 / NBRC 100127 / Av18) protein is FAD synthase.